A 460-amino-acid chain; its full sequence is Benzyl alcohol O-benzoyltransferase (460 aa).

Residues His-167 and Asp-382 each act as proton acceptor in the active site.

This sequence belongs to the plant acyltransferase family. In terms of tissue distribution, specifically expressed in flowers, mainly in the limb of flowers corollas, and, at low levels, in roots, stems, sepals and leaves.

The enzyme catalyses benzyl alcohol + benzoyl-CoA = benzyl benzoate + CoA. It catalyses the reaction benzyl alcohol + acetyl-CoA = benzyl acetate + CoA. The catalysed reaction is 3-hydroxybenzyl alcohol + acetyl-CoA = 3-hydroxy-benzyl acetate + CoA. It carries out the reaction 3-hydroxybenzyl alcohol + benzoyl-CoA = 3-hydroxy-benzyl benzoate + CoA. The enzyme catalyses 2-phenylethanol + benzoyl-CoA = phenethyl benzoate + CoA. It catalyses the reaction (3Z)-hex-3-en-1-ol + benzoyl-CoA = (3Z)-hex-3-en-1-yl benzoate + CoA. The catalysed reaction is (2E)-geraniol + acetyl-CoA = (2E)-geranyl acetate + CoA. It carries out the reaction butan-1-ol + benzoyl-CoA = butyl benzoate + CoA. The enzyme catalyses (2E)-geraniol + benzoyl-CoA = (2E)-geranyl benzoate + CoA. It catalyses the reaction octan-1-ol + benzoyl-CoA = octyl benzoate + CoA. The protein operates within aromatic compound metabolism; benzoyl-CoA degradation. Functionally, involved in the production of volatile organic compounds (VOCs), including floral volatile benzenoids and phenylpropanoids (FVBP), in flowers of fragrant cultivars (e.g. cv. Mitchell and cv. V26), scent attracting pollinators (e.g. the night-active hawkmoth pollinator Manduca sexta). Acyltransferase that catalyzes the transfer of benzoyl and acetyl moieties to a large variety of potential substrate alcohols, and involved in the formation of volatile esters benzyl benzoate and phenylethyl benzoate from benzoyl-CoA. With acetyl-CoA, mainly active on benzyl alcohol, and, to a lower extent, on 3-hydroxybenzyl alcohol, geraniol, and 2-phenylethanol, but barely active on butanol, 1-octanol, 4-hydroxy-benzyl alcohol, 2-hexanol, cis-3-hexen-1-ol and linalool. With benzoyl-CoA, mainly active on benzyl alcohol, but also efficient on several substrates, including 3-hydroxybenzyl alcohol, 2-phenylethanol, geraniol, butanol, cis-3-hexen-1-ol and 1-octanol. This chain is Benzyl alcohol O-benzoyltransferase, found in Petunia hybrida (Petunia).